Here is a 529-residue protein sequence, read N- to C-terminus: MASFVDRVVLHVSGGTGGHGCVSVHREKFKPLGGPDGGNGGDGGDVILRVDPQTTTLLDYHHAPHRHATNGGPGMGDWRGGKNGETLILPVPEGTVVKTKDGRVLADLVGEGTEFIAAAGGPGGLGNAALSSQKRRAPGFALLGIEGESSDIVLELKSIADIALVGFPSAGKSSLIAAMSAARPKIADYPFTTLIPNLGVVQAGDVRFTIADVPGLIEGASEGKGLGHHFLRHVERCAALVHVLDCGTLEADRDPLSDLAIIEAELEKYAVDMSYAGTDGEVVPLNHRPRLVALNKVDLPDGKDMAEFVRPELESRGYRVFEISATSHEGLRQLGFAMAEIVKAARDAVAATPPKVHAPVLRPRAVNEAGFKIRREEKNLEPLFRVLGDKPVRWVKQTDFTNEEAIGYLADRLAKLGVENELFKQGAKPGDTVVIGEDDGVVFDWEPTMMAGAELLASPRGTDVRFADIGDRPTRGQKRDEQQERRDAKAAARAELEAERKAGIWTESVSGRRAARPLQESGLTTENEE.

In terms of domain architecture, Obg spans 2-159; the sequence is ASFVDRVVLH…SDIVLELKSI (158 aa). The region spanning 160 to 343 is the OBG-type G domain; sequence ADIALVGFPS…LGFAMAEIVK (184 aa). Residues 166-173, 191-195, 212-215, 295-298, and 324-326 contribute to the GTP site; these read GFPSAGKS, FTTLI, DVPG, NKVD, and SAT. S173 and T193 together coordinate Mg(2+). The OCT domain maps to 363-447; it reads PRAVNEAGFK…DDGVVFDWEP (85 aa). The segment covering 466 to 502 has biased composition (basic and acidic residues); sequence FADIGDRPTRGQKRDEQQERRDAKAAARAELEAERKA. The tract at residues 466-529 is disordered; the sequence is FADIGDRPTR…ESGLTTENEE (64 aa).

The protein belongs to the TRAFAC class OBG-HflX-like GTPase superfamily. OBG GTPase family. In terms of assembly, monomer. Mg(2+) serves as cofactor.

Its subcellular location is the cytoplasm. Functionally, an essential GTPase which binds GTP, GDP and possibly (p)ppGpp with moderate affinity, with high nucleotide exchange rates and a fairly low GTP hydrolysis rate. Plays a role in control of the cell cycle, stress response, ribosome biogenesis and in those bacteria that undergo differentiation, in morphogenesis control. The chain is GTPase Obg from Arthrobacter sp. (strain FB24).